A 198-amino-acid chain; its full sequence is Carnitine operon protein CaiE (198 aa).

A disordered region spans residues 174 to 198; that stretch reads KPLTQAEENRPRLKGTTDVKPKSAQ. The span at 180-198 shows a compositional bias: basic and acidic residues; sequence EENRPRLKGTTDVKPKSAQ.

The protein belongs to the transferase hexapeptide repeat family.

The protein operates within amine and polyamine metabolism; carnitine metabolism. Functionally, overproduction of CaiE stimulates the activity of CaiB and CaiD. In Salmonella typhimurium (strain LT2 / SGSC1412 / ATCC 700720), this protein is Carnitine operon protein CaiE.